Here is a 451-residue protein sequence, read N- to C-terminus: MNYEVYCGNAHAEPNSSAVQQLAEACVEQDASYFDGCSRTCVKDKYLLPLTQFDNLEIVVYGQIFPILVLFAVFANAAVALVLSKKHMITPTNVVLKYMAIAELLVGLVPLPWTLFFFSMGNIKETHRLELWWCYLQKYSMDAFPPVFHMIAMWLTVLLAAQRYVSISHPLHSRSACNVKNVRLATMIITVTSFLCGLPKSFDYEYETVHGWIYSHGNWTYASSCVMMPTAILTNMGQTVYFNIYFWTRALGFIILPSFLLVLLNGLLIKGIRRAQRRKLRLLREKRSEEAARQRDSNSTSLMLVAIVSIFLIVNLPQAIFMGLLCVCETFTIKIPILEGTFPAVFLIASNMIVIATYPINFGIYCFMSSSFRQTFKLLFCPGASQLQCERRIEAASAVHSSRRRSDICSHLVNVCTNSEGFMQVSHHCLHVDYLVSDRQSTQFTTMDRSD.

The Extracellular portion of the chain corresponds to methionine 1–glutamine 63. Asparagine 15 carries an N-linked (GlcNAc...) asparagine glycan. Residues isoleucine 64–serine 84 traverse the membrane as a helical segment. Residues lysine 85–lysine 97 lie on the Cytoplasmic side of the membrane. A helical membrane pass occupies residues tyrosine 98–phenylalanine 118. The Extracellular segment spans residues serine 119 to serine 140. An intrachain disulfide couples cysteine 134 to cysteine 225. A helical membrane pass occupies residues methionine 141–alanine 161. Residues glutamine 162–arginine 183 lie on the Cytoplasmic side of the membrane. A helical transmembrane segment spans residues leucine 184 to tyrosine 204. The Extracellular segment spans residues glutamate 205–leucine 251. Asparagine 218 carries N-linked (GlcNAc...) asparagine glycosylation. Residues glycine 252 to isoleucine 272 form a helical membrane-spanning segment. Residues arginine 273–serine 301 are Cytoplasmic-facing. The chain crosses the membrane as a helical span at residues leucine 302 to methionine 322. Residues glycine 323–lysine 334 lie on the Extracellular side of the membrane. Residues isoleucine 335–isoleucine 355 form a helical membrane-spanning segment. Residues alanine 356–aspartate 451 are Cytoplasmic-facing.

Belongs to the G-protein coupled receptor 1 family. In terms of tissue distribution, expressed in head neurons including the ASE sensory neurons and the ASI and AWB chemosensory neurons, the midbody neurons SDQ, and motor neurons in the tail.

It is found in the cell membrane. G-protein coupled receptor for the neuropeptide like protein nlp-38. Plays a role in several types of aversive gustatory associative learning including gustatory plasticity and salt avoidance learning. Its role in salt avoidance learning may be through activation of the transcription factor crh-1/CREB and de novo transcription and translation, which in turn promotes the formation of long-term memory. The chain is Sex peptide receptor-related protein 2 from Caenorhabditis elegans.